Here is a 272-residue protein sequence, read N- to C-terminus: 3-methyl-2-oxobutanoate hydroxymethyltransferase (272 aa).

Mg(2+)-binding residues include Asp43 and Asp82. Residues 43-44 (DS), Asp82, and Lys112 each bind 3-methyl-2-oxobutanoate. Glu114 lines the Mg(2+) pocket. Residue Glu179 is the Proton acceptor of the active site.

The protein belongs to the PanB family. Homodecamer; pentamer of dimers. It depends on Mg(2+) as a cofactor.

The protein localises to the cytoplasm. It catalyses the reaction 3-methyl-2-oxobutanoate + (6R)-5,10-methylene-5,6,7,8-tetrahydrofolate + H2O = 2-dehydropantoate + (6S)-5,6,7,8-tetrahydrofolate. It functions in the pathway cofactor biosynthesis; (R)-pantothenate biosynthesis; (R)-pantoate from 3-methyl-2-oxobutanoate: step 1/2. In terms of biological role, catalyzes the reversible reaction in which hydroxymethyl group from 5,10-methylenetetrahydrofolate is transferred onto alpha-ketoisovalerate to form ketopantoate. The protein is 3-methyl-2-oxobutanoate hydroxymethyltransferase of Staphylococcus aureus (strain JH1).